The following is a 251-amino-acid chain: Carboxy-S-adenosyl-L-methionine synthase (251 aa).

Residues Tyr48, 73–75 (GCS), Asn140, and Arg207 each bind S-adenosyl-L-methionine.

The protein belongs to the class I-like SAM-binding methyltransferase superfamily. Cx-SAM synthase family. In terms of assembly, homodimer.

It catalyses the reaction prephenate + S-adenosyl-L-methionine = carboxy-S-adenosyl-L-methionine + 3-phenylpyruvate + H2O. Functionally, catalyzes the conversion of S-adenosyl-L-methionine (SAM) to carboxy-S-adenosyl-L-methionine (Cx-SAM). The chain is Carboxy-S-adenosyl-L-methionine synthase from Hydrogenovibrio crunogenus (strain DSM 25203 / XCL-2) (Thiomicrospira crunogena).